Consider the following 360-residue polypeptide: G-box-binding factor 2 (360 aa).

The segment covering 1–16 has biased composition (polar residues); that stretch reads MGSNEEGNPTNNSDKP. Disordered stretches follow at residues 1 to 26 and 150 to 275; these read MGSN…EQSN and KVGS…AETE. The span at 164–184 shows a compositional bias: low complexity; that stretch reads SQSSENDGSSNGSDGNTTGGE. Polar residues predominate over residues 198 to 208; it reads TGERPSSQNSL. The segment covering 246-264 has biased composition (basic and acidic residues); sequence NEKEVKREKRKQSNRESAR. The region spanning 249–312 is the bZIP domain; that stretch reads EVKREKRKQS…EKLRLENEAI (64 aa). Residues 251–270 are basic motif; that stretch reads KREKRKQSNRESARRSRLRK. Residues 277–312 form a leucine-zipper region; sequence LSVKVDALVAENMSLRSKLGQLNNESEKLRLENEAI. Residues 335–352 are compositionally biased toward polar residues; the sequence is NSVSGSKTVQHQLLNASP. The segment at 335–360 is disordered; sequence NSVSGSKTVQHQLLNASPITDPVAAS.

It belongs to the bZIP family. In terms of assembly, DNA-binding heterodimer. Interacts with GBF4. Interacts with BZIP16 and BZIP68. Found in both light and dark grown leaves.

The protein localises to the nucleus. Its function is as follows. Binds to the G-box motif (5'-CCACGTGG-3') of the rbcS-1A gene promoter. G-box and G-box-like motifs are cis-acting elements defined in promoters of certain plant genes which are regulated by such diverse stimuli as light-induction or hormone control. GBF2 is found to bind asymmetrically to the G-box. This is G-box-binding factor 2 (GBF2) from Arabidopsis thaliana (Mouse-ear cress).